Consider the following 147-residue polypeptide: MKEETFYLVREDVLPDAMRKTLEVKKLLDRKKADSVADAVQKVDLSRSAFYKYRDAVFPFYTMVKEQIITLFFHLEDRSGALSQLLQAVADSGSNVLSIHQTIPLQGRANVTLSISTSAMEEDIHTLMNKLRKFDFVEKVEILGSGA.

Residues 70–145 form the ACT domain; that stretch reads TLFFHLEDRS…FVEKVEILGS (76 aa).

Belongs to the UPF0735 family.

This is UPF0735 ACT domain-containing protein YszB (yszB) from Bacillus subtilis (strain 168).